Consider the following 492-residue polypeptide: Trichothecene C-15 hydroxylase (492 aa).

A helical membrane pass occupies residues 6-26 (LWPLLALSGGTGLAYLVVVVV). Residues 88-106 (AMKDVRGHRKSGEPEHGKD) show a composition bias toward basic and acidic residues. A disordered region spans residues 88–116 (AMKDVRGHRKSGEPEHGKDPISVQSNGDN). Residues Asn124, Asn198, and Asn290 are each glycosylated (N-linked (GlcNAc...) asparagine). Cys438 is a heme binding site.

The protein belongs to the cytochrome P450 family. Heme is required as a cofactor.

Its subcellular location is the membrane. Its pathway is sesquiterpene biosynthesis; trichothecene biosynthesis. Functionally, trichothecene C-15 hydroxylase; part of the core gene cluster that mediates the biosynthesis of trichothecenes, a very large family of chemically related bicyclic sesquiterpene compounds acting as mycotoxins, including T2-toxin. The biosynthesis of trichothecenes begins with the cyclization of farnesyl diphosphate to trichodiene and is catalyzed by the trichodiene synthase TRI5. Trichodiene undergoes a series of oxygenations catalyzed by the cytochrome P450 monooxygenase TRI4. TRI4 controls the addition of four oxygens at C-2, C-3, C-11, and the C-12, C-13-epoxide to form the intermediate isotrichotriol. Isotrichotriol then undergoes a non-enzymatic isomerization and cyclization to form isotrichodermol. During this process, the oxygen at the C-2 position becomes the pyran ring oxygen and the hydroxyl group at C-11 is lost. More complex type A trichothecenes are built by modifying isotrichodermol through a series of paired hydroxylation and acetylation or acylation steps. Isotrichodermol is converted to isotrichodermin by the acetyltransferase TRI101. TRI101 encodes a C-3 transacetylase that acts as a self-protection or resistance factor during biosynthesis and that the presence of a free C-3 hydroxyl group is a key component of Fusarium trichothecene phytotoxicity. A second hydroxyl group is added to C-15 by the trichothecene C-15 hydroxylase TRI11, producing 15-decalonectrin, which is then acetylated by TRI3, producing calonectrin. A third hydroxyl group is added at C-4 by the cytochrome P450 monooxygenase TRI13, converting calonectrin to 3,15-diacetoxyspirpenol, which is subsequently acetylated by the acetyltransferase TRI7. A fourth hydroxyl group is added to C-8 by the cytochrome P450 monooxygenase TRI1, followed by the addition of an isovaleryl moiety by TRI16. Finally, the acetyl group is removed from the C-3 position by the trichothecene C-3 esterase TRI8 to produce T-2 toxin. This chain is Trichothecene C-15 hydroxylase, found in Fusarium sporotrichioides.